The following is a 532-amino-acid chain: Phosphate-import permease protein PhnE (532 aa).

The disordered stretch occupies residues 1 to 20; the sequence is MTTEITRPPAPPSRPSESRK. A run of 12 helical transmembrane segments spans residues 23-45, 85-107, 134-156, 187-209, 216-235, 245-267, 287-304, 345-367, 395-417, 452-471, 478-495, and 505-527; these read LPGL…AWAI, LLMA…FLAA, LFAV…ALAL, GYFR…AMFV, LRMS…FALQ, RALG…AIAI, FGLS…FVLL, VAIG…ILAA, LAVV…LAIG, LFAA…SLYL, TSTI…YLLF, and VAGA…SGWI. An ABC transmembrane type-1 1 domain is found at 81-264; that stretch reads AVETLLMAVL…VIIAGMELLA (184 aa). The ABC transmembrane type-1 2 domain occupies 341-524; it reads AAQTVAIGVV…VIVYAIERLS (184 aa).

This sequence belongs to the binding-protein-dependent transport system permease family. The complex is composed of two ATP-binding proteins (PhnC), two transmembrane proteins (PhnE) and a solute-binding protein (PhnD).

Its subcellular location is the cell membrane. In terms of biological role, part of the ABC transporter complex PhnCDE involved in phosphate import. Responsible for the translocation of the substrate across the membrane. The sequence is that of Phosphate-import permease protein PhnE (phnE) from Mycolicibacterium smegmatis (strain ATCC 700084 / mc(2)155) (Mycobacterium smegmatis).